The chain runs to 406 residues: N-acetylmuramoyl-L-alanine amidase CwlM (406 aa).

2 peptidoglycan-binding domain regions span residues 18 to 83 (SAAV…YRAL) and 105 to 160 (GDDV…LRSL). In terms of domain architecture, MurNAc-LAA spans 193–370 (IIIDPGRGGV…IAEGILAAVK (178 aa)).

Belongs to the N-acetylmuramoyl-L-alanine amidase 3 family.

It localises to the periplasm. It carries out the reaction Hydrolyzes the link between N-acetylmuramoyl residues and L-amino acid residues in certain cell-wall glycopeptides.. It participates in cell wall degradation; peptidoglycan degradation. Its function is as follows. Cell-wall hydrolase that hydrolyzes the amide bond between N-acetylmuramic acid and L-alanine in cell-wall glycopeptides. Is able to lyse whole mycobacteria, release peptidoglycan from the cell wall of M.luteus and M.smegmatis, and cleave N-acetylmuramoyl-L-alanyl-D-isoglutamine, releasing free N-acetylmuramic acid and dipeptide. The polypeptide is N-acetylmuramoyl-L-alanine amidase CwlM (Mycobacterium tuberculosis (strain ATCC 25618 / H37Rv)).